We begin with the raw amino-acid sequence, 330 residues long: Calponin-3 (330 aa).

Residue lysine 23 is modified to N6-acetyllysine. Residues 26 to 130 form the Calponin-homology (CH) domain; the sequence is QQAEEDLRNW…TLVALAGLAK (105 aa). Lysine 158 carries the post-translational modification N6-methyllysine. Calponin-like repeat units lie at residues 164–189, 204–229, and 243–268; these read IGLQ…RHLY, ISLQ…RDIY, and ISLQ…RQVY. The disordered stretch occupies residues 279 to 330; that stretch reads PVIHNGSQGTGTNGSEISDSDYQAEYPDEYHGEYPDDYPREYQYGDDQGIDY. The segment covering 306-318 has biased composition (basic and acidic residues); sequence DEYHGEYPDDYPR.

Belongs to the calponin family.

Its function is as follows. Thin filament-associated protein that is implicated in the regulation and modulation of smooth muscle contraction. It is capable of binding to actin, calmodulin and tropomyosin. The interaction of calponin with actin inhibits the actomyosin Mg-ATPase activity. The chain is Calponin-3 (Cnn3) from Mus musculus (Mouse).